We begin with the raw amino-acid sequence, 271 residues long: Large ribosomal subunit protein uL15c (271 aa).

Disordered regions lie at residues 1-21 and 66-120; these read MASL…NNYP and SNVS…QKSR. A chloroplast-targeting transit peptide spans 1 to 61; that stretch reads MASLLSLSST…KESTRLVVVA (61 aa). Low complexity predominate over residues 66 to 76; the sequence is SNVSPSIGSGS. The span at 91-101 shows a compositional bias: basic residues; the sequence is SRKKGKRKGRG. Residues 102–114 show a composition bias toward gly residues; that stretch reads HAAGQGGSCGFGM.

Component of the chloroplast large ribosomal subunit (LSU). Mature 70S chloroplast ribosomes of higher plants consist of a small (30S) and a large (50S) subunit. The 30S small subunit contains 1 molecule of ribosomal RNA (16S rRNA) and 24 different proteins. The 50S large subunit contains 3 rRNA molecules (23S, 5S and 4.5S rRNA) and 33 different proteins.

Its subcellular location is the plastid. It localises to the chloroplast. Component of the chloroplast ribosome (chloro-ribosome), a dedicated translation machinery responsible for the synthesis of chloroplast genome-encoded proteins, including proteins of the transcription and translation machinery and components of the photosynthetic apparatus. The sequence is that of Large ribosomal subunit protein uL15c (RPL15) from Spinacia oleracea (Spinach).